A 105-amino-acid polypeptide reads, in one-letter code: uncharacterized protein (105 aa).

The helical transmembrane segment at 13–35 (LLFAFVVVIVVLTLSYVYAQNII) threads the bilayer.

It is found in the membrane. This is an uncharacterized protein from Archaeoglobus fulgidus (strain ATCC 49558 / DSM 4304 / JCM 9628 / NBRC 100126 / VC-16).